Here is a 505-residue protein sequence, read N- to C-terminus: Probable cytosol aminopeptidase (505 aa).

Residues lysine 269 and aspartate 274 each coordinate Mn(2+). Lysine 281 is an active-site residue. 3 residues coordinate Mn(2+): aspartate 292, aspartate 351, and glutamate 353. Residue arginine 355 is part of the active site.

It belongs to the peptidase M17 family. It depends on Mn(2+) as a cofactor.

It is found in the cytoplasm. It catalyses the reaction Release of an N-terminal amino acid, Xaa-|-Yaa-, in which Xaa is preferably Leu, but may be other amino acids including Pro although not Arg or Lys, and Yaa may be Pro. Amino acid amides and methyl esters are also readily hydrolyzed, but rates on arylamides are exceedingly low.. The catalysed reaction is Release of an N-terminal amino acid, preferentially leucine, but not glutamic or aspartic acids.. Presumably involved in the processing and regular turnover of intracellular proteins. Catalyzes the removal of unsubstituted N-terminal amino acids from various peptides. In Rhodococcus jostii (strain RHA1), this protein is Probable cytosol aminopeptidase.